The sequence spans 582 residues: Hemagglutinin-neuraminidase (582 aa).

Over 1 to 34 (MEPSKLFTMSDNATFAPGPVVNAADKKTFRTCFR) the chain is Intravirion. A helical membrane pass occupies residues 35–55 (ILVLSVQAVTLILVIVTLGEL). Over 56–582 (VRMINDQGLS…LPVLTRLTIT (527 aa)) the chain is Virion surface. Intrachain disulfides connect Cys178–Cys202, Cys192–Cys253, and Cys244–Cys257. 2 N-linked (GlcNAc...) asparagine; by host glycosylation sites follow: Asn284 and Asn329. 3 disulfide bridges follow: Cys350–Cys471, Cys382–Cys392, and Cys465–Cys475. 2 N-linked (GlcNAc...) asparagine; by host glycosylation sites follow: Asn400 and Asn448. Residue Asn507 is glycosylated (N-linked (GlcNAc...) asparagine; by host). A disulfide bridge links Cys545 with Cys556.

Belongs to the paramyxoviruses hemagglutinin-neuraminidase family. As to quaternary structure, homotetramer; composed of disulfide-linked homodimers. Interacts with F protein trimer.

It is found in the virion membrane. The protein resides in the host cell membrane. It catalyses the reaction Hydrolysis of alpha-(2-&gt;3)-, alpha-(2-&gt;6)-, alpha-(2-&gt;8)- glycosidic linkages of terminal sialic acid residues in oligosaccharides, glycoproteins, glycolipids, colominic acid and synthetic substrates.. Attaches the virus to alpha-2,3-linked sialic acid-containing cell receptors and thereby initiating infection. Binding of HN protein to the receptor induces a conformational change that allows the F protein to trigger virion/cell membranes fusion. Binds to the glycan motifs sialyl Lewis (SLe) and GM2 ganglioside (GM2-glycan). Functionally, neuraminidase activity ensures the efficient spread of the virus by dissociating the mature virions from the neuraminic acid containing glycoproteins. The sequence is that of Hemagglutinin-neuraminidase from Mumps orthorubulavirus (MuV).